The primary structure comprises 536 residues: Feruloyl esterase B (536 aa).

The N-terminal stretch at 1 to 20 (MKTSIVLSIVALFLTSKASA) is a signal peptide. The CBM10 domain occupies 21–59 (DCWSERLGWPCCSDSNAEVIYVDDDGDWGVENNDWCGIQ). The cellulose-binding stretch occupies residues 22 to 59 (CWSERLGWPCCSDSNAEVIYVDDDGDWGVENNDWCGIQ). N65 is a glycosylation site (N-linked (GlcNAc...) asparagine). A run of 12 repeats spans residues 78–90 (NQGG…DFGG), 91–103 (NQGG…DFGG), 104–116 (NQGG…DFGG), 117–129 (NQGG…DFGG), 134–146 (NQGG…DFGG), 151–163 (NQGG…DFGG), 164–176 (NQGG…DFGG), 181–193 (NQGG…DFGG), 194–206 (NQGG…DFGG), 211–223 (NQGG…DFGG), 224–236 (NQGG…DFGG), and 237–249 (NQGG…DFGG). The interval 78 to 249 (NQGGGMPWGD…GGMQWGDFGG (172 aa)) is 12 X 13 AA repeats of N-Q-G-G-G-M-[PQ]-W-G-D-F-G-G. Over residues 203 to 252 (DFGGNQGGNQGGGMPWGDFGGNQGGGMQWGDFGGNQGGGMQWGDFGGNQG) the composition is skewed to gly residues. The tract at residues 203-273 (DFGGNQGGNQ…SGPTVEYSTD (71 aa)) is disordered. The segment at 257-536 (WGNQGGNSGP…WDFVKQFSLP (280 aa)) is catalytic.

In terms of assembly, component of the multienzyme cellulase-hemicellulase complex.

The protein resides in the secreted. The catalysed reaction is feruloyl-polysaccharide + H2O = ferulate + polysaccharide.. Inhibited by the specific serine esterase inhibitor AEBSF. Functionally, involved in degradation of plant cell walls. Hydrolyzes of the feruloyl-arabinose ester bond in arabinoxylans as well as the feruloyl-galactose and feruloyl-arabinose ester bonds in pectin. The chain is Feruloyl esterase B (ESTA) from Piromyces equi.